The chain runs to 38 residues: Photosystem II reaction center protein L (38 aa).

Residues 17–37 (GLYWGLLLIFVLAVLFSSYFF) form a helical membrane-spanning segment.

This sequence belongs to the PsbL family. In terms of assembly, PSII is composed of 1 copy each of membrane proteins PsbA, PsbB, PsbC, PsbD, PsbE, PsbF, PsbH, PsbI, PsbJ, PsbK, PsbL, PsbM, PsbT, PsbX, PsbY, PsbZ, Psb30/Ycf12, at least 3 peripheral proteins of the oxygen-evolving complex and a large number of cofactors. It forms dimeric complexes.

The protein resides in the plastid. Its subcellular location is the chloroplast thylakoid membrane. In terms of biological role, one of the components of the core complex of photosystem II (PSII). PSII is a light-driven water:plastoquinone oxidoreductase that uses light energy to abstract electrons from H(2)O, generating O(2) and a proton gradient subsequently used for ATP formation. It consists of a core antenna complex that captures photons, and an electron transfer chain that converts photonic excitation into a charge separation. This subunit is found at the monomer-monomer interface and is required for correct PSII assembly and/or dimerization. The polypeptide is Photosystem II reaction center protein L (Staurastrum punctulatum (Green alga)).